The chain runs to 251 residues: 2,3-bisphosphoglycerate-dependent phosphoglycerate mutase 2 (251 aa).

Substrate is bound by residues 8 to 15, 21 to 22, Arg-60, 87 to 90, Lys-98, 114 to 115, and 183 to 184; these read RHGESTWN, TG, ERHY, RR, and GN. The Tele-phosphohistidine intermediate role is filled by His-9. Residue Glu-87 is the Proton donor/acceptor of the active site.

It belongs to the phosphoglycerate mutase family. BPG-dependent PGAM subfamily. Homodimer.

It carries out the reaction (2R)-2-phosphoglycerate = (2R)-3-phosphoglycerate. Its pathway is carbohydrate degradation; glycolysis; pyruvate from D-glyceraldehyde 3-phosphate: step 3/5. Functionally, catalyzes the interconversion of 2-phosphoglycerate and 3-phosphoglycerate. This is 2,3-bisphosphoglycerate-dependent phosphoglycerate mutase 2 from Nitrosospira multiformis (strain ATCC 25196 / NCIMB 11849 / C 71).